Reading from the N-terminus, the 498-residue chain is O-methyltransferase OME1 (498 aa).

Residues methionine 1–alanine 19 are compositionally biased toward polar residues. Disordered stretches follow at residues methionine 1 to glycine 23 and histidine 42 to tyrosine 83. Low complexity predominate over residues serine 50–serine 65. Residue aspartate 358 coordinates S-adenosyl-L-methionine. The active-site Proton acceptor is the histidine 406.

This sequence belongs to the class I-like SAM-binding methyltransferase superfamily. Cation-independent O-methyltransferase family.

It participates in secondary metabolite biosynthesis. O-methyltransferase; part of the gene cluster that mediates the biosynthesis of a tyrosine-derived cytochalasan acting as a fungal signal recognized by resistant rice plants and leads to avirulence in Pi33 resistant rice cultivars. The first step in the pathway is catalyzed by the hybrid PKS-NRPS ACE1, assisted by the enoyl reductase RAP1, that are responsible for fusion of the tyrosine precursor and the polyketide backbone. The polyketide synthase module (PKS) of ACE1 is responsible for the synthesis of the polyketide backbone and the downstream nonribosomal peptide synthetase (NRPS) amidates the carboxyl end of the polyketide with the tyrosine precursor. Because ACE1 lacks a designated enoylreductase (ER) domain, the required activity is provided the enoyl reductase RAP1. Reduction by the hydrolyase ORFZ, followed by dehydration and intra-molecular Diels-Alder cyclization by the Diels-Alderase ORF3 then yield the required isoindolone-fused macrocycle. A number of oxidative steps catalyzed by the tailoring enzymes identified within the cluster, including cytochrome P450 monooxygenases CYP1 to CYP4, the FAD-linked oxidoreductase OXR2 and the short-chain dehydrogenase/reductase OXR1, are further required to afford the final cytochalasans that confer avirulence and which have still to be identified. The monooxygenase CYP1 has been shown to be a site-selective C-18 hydroxylase whereas the function of CYP3 is the site-selective epoxidation of the C-6/C-7 olefin that is present in some intermediate compounds. Finally, SYN2 and RAP2 are not required for avirulence in Pi33 resistant rice cultivars. The chain is O-methyltransferase OME1 from Pyricularia oryzae (strain 70-15 / ATCC MYA-4617 / FGSC 8958) (Rice blast fungus).